We begin with the raw amino-acid sequence, 209 residues long: Phosphoheptose isomerase (209 aa).

In terms of domain architecture, SIS spans 50–209 (IAETFRNGGK…ELVESMMGYA (160 aa)). 65–67 (NGG) is a substrate binding site. Zn(2+)-binding residues include His74 and Glu78. Substrate is bound by residues Glu78, 109–110 (ND), 135–137 (STS), Ser140, and Gln188. Zn(2+)-binding residues include Gln188 and His196.

Belongs to the SIS family. GmhA subfamily. It depends on Zn(2+) as a cofactor.

It localises to the cytoplasm. It carries out the reaction 2 D-sedoheptulose 7-phosphate = D-glycero-alpha-D-manno-heptose 7-phosphate + D-glycero-beta-D-manno-heptose 7-phosphate. It participates in carbohydrate biosynthesis; D-glycero-D-manno-heptose 7-phosphate biosynthesis; D-glycero-alpha-D-manno-heptose 7-phosphate and D-glycero-beta-D-manno-heptose 7-phosphate from sedoheptulose 7-phosphate: step 1/1. In terms of biological role, catalyzes the isomerization of sedoheptulose 7-phosphate in D-glycero-D-manno-heptose 7-phosphate. This chain is Phosphoheptose isomerase, found in Chlorobaculum parvum (strain DSM 263 / NCIMB 8327) (Chlorobium vibrioforme subsp. thiosulfatophilum).